Consider the following 345-residue polypeptide: Phenylalanine--tRNA ligase alpha subunit (345 aa).

Position 255 (Glu255) interacts with Mg(2+).

Belongs to the class-II aminoacyl-tRNA synthetase family. Phe-tRNA synthetase alpha subunit type 1 subfamily. In terms of assembly, tetramer of two alpha and two beta subunits. Mg(2+) is required as a cofactor.

The protein localises to the cytoplasm. The catalysed reaction is tRNA(Phe) + L-phenylalanine + ATP = L-phenylalanyl-tRNA(Phe) + AMP + diphosphate + H(+). In Lysinibacillus sphaericus (strain C3-41), this protein is Phenylalanine--tRNA ligase alpha subunit.